Reading from the N-terminus, the 533-residue chain is Adenine deaminase (533 aa).

It belongs to the metallo-dependent hydrolases superfamily. Adenine deaminase family. The cofactor is Mn(2+).

It carries out the reaction adenine + H2O + H(+) = hypoxanthine + NH4(+). In Sulfurovum sp. (strain NBC37-1), this protein is Adenine deaminase.